Consider the following 200-residue polypeptide: Large ribosomal subunit protein uL4 (200 aa).

The disordered stretch occupies residues 38–67; that stretch reads GRQGSKAQKTRSEVSGGGKKPWRQKGTGRA.

It belongs to the universal ribosomal protein uL4 family. Part of the 50S ribosomal subunit.

Its function is as follows. One of the primary rRNA binding proteins, this protein initially binds near the 5'-end of the 23S rRNA. It is important during the early stages of 50S assembly. It makes multiple contacts with different domains of the 23S rRNA in the assembled 50S subunit and ribosome. Functionally, forms part of the polypeptide exit tunnel. The polypeptide is Large ribosomal subunit protein uL4 (Pseudomonas paraeruginosa (strain DSM 24068 / PA7) (Pseudomonas aeruginosa (strain PA7))).